The following is a 506-amino-acid chain: Chaperone SurA (506 aa).

An N-terminal signal peptide occupies residues 1–29; the sequence is MMRRLHSSRRFSGSLLALALGLALPLAHA. 2 consecutive PpiC domains span residues 219 to 320 and 351 to 450; these read PVML…KVLQ and VTQT…QVLE.

It is found in the periplasm. It catalyses the reaction [protein]-peptidylproline (omega=180) = [protein]-peptidylproline (omega=0). Chaperone involved in the correct folding and assembly of outer membrane proteins. Recognizes specific patterns of aromatic residues and the orientation of their side chains, which are found more frequently in integral outer membrane proteins. May act in both early periplasmic and late outer membrane-associated steps of protein maturation. The protein is Chaperone SurA of Bordetella avium (strain 197N).